The following is a 118-amino-acid chain: Thioredoxin H3 (118 aa).

N-acetylalanine is present on alanine 2. In terms of domain architecture, Thioredoxin spans 2–113 (AAEGEVIACH…IIANLEKHKT (112 aa)). Active-site nucleophile residues include cysteine 39 and cysteine 42. Residues cysteine 39 and cysteine 42 are joined by a disulfide bond.

The protein belongs to the thioredoxin family. Plant H-type subfamily. In terms of assembly, interacts with FBA5 and FBA8. Interacts with FBA6. Interacts with MDH1.

It is found in the cytoplasm. Thiol-disulfide oxidoreductase that possesses disulfide reductase and insulin disulfide bonds reducing activities. Heat shock causes oligomerization and formation of high molecular weight (HMW) complexes with concomitant functional switching from a disulfide reductase to chaperone. The protein is Thioredoxin H3 (TRX3) of Arabidopsis thaliana (Mouse-ear cress).